The primary structure comprises 150 residues: D-aminoacyl-tRNA deacylase (150 aa).

The short motif at 137–138 is the Gly-cisPro motif, important for rejection of L-amino acids element; that stretch reads GP.

Belongs to the DTD family. As to quaternary structure, homodimer.

The protein resides in the cytoplasm. It carries out the reaction glycyl-tRNA(Ala) + H2O = tRNA(Ala) + glycine + H(+). The enzyme catalyses a D-aminoacyl-tRNA + H2O = a tRNA + a D-alpha-amino acid + H(+). Its function is as follows. An aminoacyl-tRNA editing enzyme that deacylates mischarged D-aminoacyl-tRNAs. Also deacylates mischarged glycyl-tRNA(Ala), protecting cells against glycine mischarging by AlaRS. Acts via tRNA-based rather than protein-based catalysis; rejects L-amino acids rather than detecting D-amino acids in the active site. By recycling D-aminoacyl-tRNA to D-amino acids and free tRNA molecules, this enzyme counteracts the toxicity associated with the formation of D-aminoacyl-tRNA entities in vivo and helps enforce protein L-homochirality. The chain is D-aminoacyl-tRNA deacylase from Listeria monocytogenes serotype 4b (strain CLIP80459).